A 149-amino-acid polypeptide reads, in one-letter code: Calmodulin-like protein 3 (149 aa).

4 consecutive EF-hand domains span residues 8 to 43 (EQIA…LGQN), 44 to 79 (PTEA…KMKD), 81 to 116 (DSEE…LGEK), and 117 to 149 (LSDE…LVSK). Residues Asp21, Asp23, Asp25, Cys27, Glu32, Asp57, Asp59, Asn61, Thr63, Glu68, Asp94, Asp96, Asn98, Glu105, Asp130, Asp132, Asp134, Gln136, and Glu141 each contribute to the Ca(2+) site.

The protein belongs to the calmodulin family. In terms of assembly, interacts with MYO10, the interaction is calcium-dependent and essential for MYO10 function in filopodial extension.

Functionally, may function as a specific light chain of unconventional myosin-10 (MYO10), also enhances MYO10 translation, possibly by acting as a chaperone for the emerging MYO10 heavy chain protein. May compete with calmodulin by binding, with different affinities, to cellular substrates. The chain is Calmodulin-like protein 3 (Calml3) from Rattus norvegicus (Rat).